The primary structure comprises 209 residues: Kynurenine formamidase (209 aa).

Residue phenylalanine 18 participates in substrate binding. Residues histidine 48, histidine 52, and aspartate 54 each contribute to the Zn(2+) site. The Proton donor/acceptor role is filled by histidine 58. The Zn(2+) site is built by histidine 160 and glutamate 172.

It belongs to the Cyclase 1 superfamily. KynB family. Homodimer. It depends on Zn(2+) as a cofactor.

The enzyme catalyses N-formyl-L-kynurenine + H2O = L-kynurenine + formate + H(+). It functions in the pathway amino-acid degradation; L-tryptophan degradation via kynurenine pathway; L-kynurenine from L-tryptophan: step 2/2. Functionally, catalyzes the hydrolysis of N-formyl-L-kynurenine to L-kynurenine, the second step in the kynurenine pathway of tryptophan degradation. This Bordetella bronchiseptica (strain ATCC BAA-588 / NCTC 13252 / RB50) (Alcaligenes bronchisepticus) protein is Kynurenine formamidase.